The primary structure comprises 174 residues: Micrococcal nuclease (174 aa).

The signal sequence occupies residues 1–23 (MKSALAALRAVAAAVVLIVSVPA). Residues R52, E60, and R94 contribute to the active site.

The protein belongs to the thermonuclease family.

The enzyme catalyses Endonucleolytic cleavage to nucleoside 3'-phosphates and 3'-phosphooligonucleotide end-products.. This chain is Micrococcal nuclease (nuc), found in Shigella flexneri.